The sequence spans 111 residues: Large ribosomal subunit protein uL22 (111 aa).

The protein belongs to the universal ribosomal protein uL22 family. Part of the 50S ribosomal subunit.

Functionally, this protein binds specifically to 23S rRNA; its binding is stimulated by other ribosomal proteins, e.g. L4, L17, and L20. It is important during the early stages of 50S assembly. It makes multiple contacts with different domains of the 23S rRNA in the assembled 50S subunit and ribosome. In terms of biological role, the globular domain of the protein is located near the polypeptide exit tunnel on the outside of the subunit, while an extended beta-hairpin is found that lines the wall of the exit tunnel in the center of the 70S ribosome. The chain is Large ribosomal subunit protein uL22 from Fusobacterium nucleatum subsp. nucleatum (strain ATCC 25586 / DSM 15643 / BCRC 10681 / CIP 101130 / JCM 8532 / KCTC 2640 / LMG 13131 / VPI 4355).